A 756-amino-acid chain; its full sequence is Phosphoinositide 3-kinase regulatory subunit 6 (756 aa).

2 disordered regions span residues 570 to 589 (SKSP…EGTG) and 716 to 738 (CSRT…EKNM). Polar residues predominate over residues 717-731 (SRTQKSKTSALNSHG).

As to quaternary structure, heterodimer of a catalytic subunit (PIK3CG) and a regulatory (PIK3R6) subunit. The binding of PIK3R6 to PIK3CG may exclude the binding of PIK3R5 to PIK3CG. Interacts with beta-gamma G protein dimers. Interacts with PDE3B and RAPGEF3; form a signaling complex that regulates phosphatidylinositol 3-kinase gamma in angiogenesis. As to expression, highly expressed in heart. In a lower extent, also expressed in brain, spleen, lung, liver, kidney, prostate, thyroid, salivary gland, dendritic cells, macrophages and neutrophils.

The protein localises to the cytoplasm. Its subcellular location is the cell membrane. Its function is as follows. Regulatory subunit of the PI3K gamma complex. Acts as an adapter to drive activation of PIK3CG by beta-gamma G protein dimers. The PIK3CG:PIK3R6 heterodimer is much less sensitive to beta-gamma G proteins than PIK3CG:PIK3R5 and its membrane recruitment and beta-gamma G protein dimer-dependent activation requires HRAS bound to PIK3CG. Recruits of the PI3K gamma complex to a PDE3B:RAPGEF3 signaling complex involved in angiogenesis; signaling seems to involve RRAS. This Mus musculus (Mouse) protein is Phosphoinositide 3-kinase regulatory subunit 6 (Pik3r6).